We begin with the raw amino-acid sequence, 119 residues long: Protein TusC (119 aa).

This sequence belongs to the DsrF/TusC family. In terms of assembly, heterohexamer, formed by a dimer of trimers. The hexameric TusBCD complex contains 2 copies each of TusB, TusC and TusD. The TusBCD complex interacts with TusE.

It is found in the cytoplasm. Functionally, part of a sulfur-relay system required for 2-thiolation of 5-methylaminomethyl-2-thiouridine (mnm(5)s(2)U) at tRNA wobble positions. The sequence is that of Protein TusC from Sodalis glossinidius (strain morsitans).